A 359-amino-acid chain; its full sequence is Structure-specific endonuclease subunit SLX1 homolog (359 aa).

A GIY-YIG domain is found at 9-91; the sequence is GLFACYCLVA…TYPTRSRYVN (83 aa). Residues 192-238 form an SLX1-type zinc finger; that stretch reads CPICQDGVSPSNVQCMQCSARFCITCAGKLFTRRNTLIPCFGKCPIC. A disordered region spans residues 256–359; the sequence is VAGRKSVPHK…LPSDVISITD (104 aa). Polar residues predominate over residues 269–281; it reads VDGQSSLSQNSSY. Over residues 295–306 the composition is skewed to basic and acidic residues; that stretch reads EPEKDDISRDES. The segment covering 316–326 has biased composition (low complexity); that stretch reads SSVALSDSSRS.

This sequence belongs to the SLX1 family. As to quaternary structure, forms a heterodimer with a member of the SLX4 family. The cofactor is a divalent metal cation.

It localises to the nucleus. Catalytic subunit of a heterodimeric structure-specific endonuclease that resolves DNA secondary structures generated during DNA repair and recombination. Has endonuclease activity towards branched DNA substrates, introducing single-strand cuts in duplex DNA close to junctions with ss-DNA. This is Structure-specific endonuclease subunit SLX1 homolog from Giardia intestinalis (strain ATCC 50803 / WB clone C6) (Giardia lamblia).